The sequence spans 698 residues: Vertnin (698 aa).

The protein belongs to the vertnin family.

It localises to the nucleus. Its function is as follows. Acts as a transcription factor that regulates development of thoracic vertebrae. The protein is Vertnin (VRTN) of Sus scrofa (Pig).